The primary structure comprises 93 residues: Large ribosomal subunit protein mL41 (93 aa).

A mitochondrion-targeting transit peptide spans 1-13 (MHQSLLCFGARRL).

It belongs to the mitochondrion-specific ribosomal protein mL41 family. In terms of assembly, component of the mitochondrial large ribosomal subunit (mt-LSU). Mature yeast 74S mitochondrial ribosomes consist of a small (37S) and a large (54S) subunit. The 37S small subunit contains a 15S ribosomal RNA (15S mt-rRNA) and at least 32 different proteins. The 54S large subunit contains a 21S rRNA (21S mt-rRNA) and at least 45 different proteins.

Its subcellular location is the mitochondrion. In terms of biological role, component of the mitochondrial ribosome (mitoribosome), a dedicated translation machinery responsible for the synthesis of mitochondrial genome-encoded proteins, including at least some of the essential transmembrane subunits of the mitochondrial respiratory chain. The mitoribosomes are attached to the mitochondrial inner membrane and translation products are cotranslationally integrated into the membrane. This Schizosaccharomyces pombe (strain 972 / ATCC 24843) (Fission yeast) protein is Large ribosomal subunit protein mL41 (mrpl27).